The sequence spans 221 residues: Probable septum site-determining protein MinC (221 aa).

Belongs to the MinC family. As to quaternary structure, interacts with MinD and FtsZ.

Functionally, cell division inhibitor that blocks the formation of polar Z ring septums. Rapidly oscillates between the poles of the cell to destabilize FtsZ filaments that have formed before they mature into polar Z rings. Prevents FtsZ polymerization. The polypeptide is Probable septum site-determining protein MinC (Shewanella sp. (strain ANA-3)).